Reading from the N-terminus, the 195-residue chain is Cbp/p300-interacting transactivator 1 (195 aa).

Disordered stretches follow at residues 1–24 (MPTM…NANP) and 51–149 (ASNG…SPAI). Positions 54–78 (GTKASGAPTSSSGSPSPISSSTATP) are enriched in low complexity. Positions 97–106 (MQLQKLNSQY) are enriched in polar residues. The span at 137-148 (SLSPSAGAQSPA) shows a compositional bias: low complexity. Residues 160–169 (LMSLVVELGL) carry the Nuclear export signal motif.

The protein belongs to the CITED family. As to quaternary structure, interacts (via C-terminus) with CREBBP. Interacts with EGR2. Homodimer. Binds to RBM14. Interacts (via N-terminus) with HSPA8; the interaction suppresses the association of CITED1 with p300/CBP and SMAD-mediated transcription transactivation. Interacts (via C-terminus) with TOX3 (via HGM box); the interaction increases estrogen-response element (ERE)-dependent transcription and protection against cell death. Interacts with ESR1; the interaction occurs in a estrogen-dependent manner. Interacts (unphosphorylated form preferentially and via C-terminus) with EP300. Post-translationally, phosphorylated. Phosphorylation changes in a cell cycle-dependent manner and reduces its transcriptional cofactor activity.

The protein localises to the nucleus. It is found in the cytoplasm. Transcriptional coactivator of the p300/CBP-mediated transcription complex. Enhances SMAD-mediated transcription by strengthening the functional link between the DNA-binding SMAD transcription factors and the p300/CBP transcription coactivator complex. Stimulates estrogen-dependent transactivation activity mediated by estrogen receptors signaling; stabilizes the interaction of estrogen receptor ESR1 and histone acetyltransferase EP300. Positively regulates TGF-beta signaling through its association with the SMAD/p300/CBP-mediated transcriptional coactivator complex. Induces transcription from estrogen-responsive promoters and protection against cell death. Potentiates EGR2-mediated transcriptional activation activity from the ERBB2 promoter. Acts as an inhibitor of osteoblastic mineralization through a cAMP-dependent parathyroid hormone receptor signaling. May play a role in pigmentation of melanocytes. Associates with chromatin to the estrogen-responsive TGF-alpha promoter region in a estrogen-dependent manner. The protein is Cbp/p300-interacting transactivator 1 (CITED1) of Bos taurus (Bovine).